A 66-amino-acid polypeptide reads, in one-letter code: Nigrocin-2ISb (66 aa).

Residues 1-22 form the signal peptide; that stretch reads MFTLKKSMLLLFFLGTINLSLC. Positions 23-43 are cleaved as a propeptide — removed in mature form; the sequence is QEERDAEEERRDEDNAKMEEI. Cysteine 60 and cysteine 66 are oxidised to a cystine.

In terms of tissue distribution, expressed by the skin glands.

Its subcellular location is the secreted. Has antimicrobial activity against Gram-negative bacterium E.coli ATCC 8739 (MIC=50 ug), against Gram positive bacteria S.aureus ATCC 6538 (MIC=3.1 ug), methicillin-resistant S.aureus ATCC 43300 (MIC=12.5 ug), B.subtilis ATCC 6633 (MIC=12.5 ug) and against fungus C.albicans ATCC 90028 (MIC=50 ug). This is Nigrocin-2ISb from Odorrana ishikawae (Ishikawa's frog).